The sequence spans 94 residues: Pyrimidine/purine nucleoside phosphorylase (94 aa).

Belongs to the nucleoside phosphorylase PpnP family.

It catalyses the reaction a purine D-ribonucleoside + phosphate = a purine nucleobase + alpha-D-ribose 1-phosphate. The enzyme catalyses adenosine + phosphate = alpha-D-ribose 1-phosphate + adenine. The catalysed reaction is cytidine + phosphate = cytosine + alpha-D-ribose 1-phosphate. It carries out the reaction guanosine + phosphate = alpha-D-ribose 1-phosphate + guanine. It catalyses the reaction inosine + phosphate = alpha-D-ribose 1-phosphate + hypoxanthine. The enzyme catalyses thymidine + phosphate = 2-deoxy-alpha-D-ribose 1-phosphate + thymine. The catalysed reaction is uridine + phosphate = alpha-D-ribose 1-phosphate + uracil. It carries out the reaction xanthosine + phosphate = alpha-D-ribose 1-phosphate + xanthine. In terms of biological role, catalyzes the phosphorolysis of diverse nucleosides, yielding D-ribose 1-phosphate and the respective free bases. Can use uridine, adenosine, guanosine, cytidine, thymidine, inosine and xanthosine as substrates. Also catalyzes the reverse reactions. This Cronobacter sakazakii (strain ATCC BAA-894) (Enterobacter sakazakii) protein is Pyrimidine/purine nucleoside phosphorylase.